The chain runs to 427 residues: Glutamate-1-semialdehyde 2,1-aminomutase (427 aa).

Lys-267 is modified (N6-(pyridoxal phosphate)lysine).

It belongs to the class-III pyridoxal-phosphate-dependent aminotransferase family. HemL subfamily. As to quaternary structure, homodimer. Requires pyridoxal 5'-phosphate as cofactor.

It is found in the cytoplasm. It carries out the reaction (S)-4-amino-5-oxopentanoate = 5-aminolevulinate. The protein operates within porphyrin-containing compound metabolism; protoporphyrin-IX biosynthesis; 5-aminolevulinate from L-glutamyl-tRNA(Glu): step 2/2. This chain is Glutamate-1-semialdehyde 2,1-aminomutase, found in Geotalea uraniireducens (strain Rf4) (Geobacter uraniireducens).